The chain runs to 278 residues: Phosphatidylglycerol--prolipoprotein diacylglyceryl transferase (278 aa).

3 consecutive transmembrane segments (helical) span residues 21–41 (WYGI…QASV), 54–74 (IIFW…VIFQ), and 88–108 (IWHG…TGII). Arginine 136 provides a ligand contact to a 1,2-diacyl-sn-glycero-3-phospho-(1'-sn-glycerol). The next 2 membrane-spanning stretches (helical) occupy residues 176–196 (QPTF…LILL) and 234–254 (IRVA…IMII).

This sequence belongs to the Lgt family.

It is found in the cell membrane. The catalysed reaction is L-cysteinyl-[prolipoprotein] + a 1,2-diacyl-sn-glycero-3-phospho-(1'-sn-glycerol) = an S-1,2-diacyl-sn-glyceryl-L-cysteinyl-[prolipoprotein] + sn-glycerol 1-phosphate + H(+). It participates in protein modification; lipoprotein biosynthesis (diacylglyceryl transfer). Catalyzes the transfer of the diacylglyceryl group from phosphatidylglycerol to the sulfhydryl group of the N-terminal cysteine of a prolipoprotein, the first step in the formation of mature lipoproteins. This chain is Phosphatidylglycerol--prolipoprotein diacylglyceryl transferase, found in Staphylococcus xylosus.